A 224-amino-acid polypeptide reads, in one-letter code: Claudin-17 (224 aa).

The Cytoplasmic segment spans residues 1-7 (MAFYPLQ). A helical membrane pass occupies residues 8 to 28 (IAGLVLGFLGMVGTLATTLLP). Residues 29–81 (QWRVSAFVGSNIIVFERLWEGLWMNCIRQARVRLQCKFYSSLLALPPALETAR) lie on the Extracellular side of the membrane. A helical transmembrane segment spans residues 82–102 (ALMCVAVALSLIALLIGICGM). Topologically, residues 103–124 (KQVQCTGSNERAKAYLLGTSGV) are cytoplasmic. Residues 125–145 (LFILTGIFVLIPVSWTANIII) traverse the membrane as a helical segment. Residues 146-164 (RDFYNPAIHIGQKRELGAA) lie on the Extracellular side of the membrane. A helical transmembrane segment spans residues 165 to 185 (LFLGWASAAVLFIGGGLLCGF). The Cytoplasmic portion of the chain corresponds to 186-224 (CCCNRKKQGYRYPVPGYRVPHTDKRRNTTMLSKTSTSYV).

This sequence belongs to the claudin family. Cannot form tight junction strands on its own. Interacts with OCLN. In the kidney, expressed in the proximal tubule and in the Henle's loop. In the distal convoluted tubule, not expressed in all tubules. Not detected in the collecting duct (at protein level).

The protein localises to the cell junction. It localises to the tight junction. Its subcellular location is the basolateral cell membrane. The catalysed reaction is chloride(in) = chloride(out). The enzyme catalyses hydrogencarbonate(in) = hydrogencarbonate(out). It carries out the reaction bromide(in) = bromide(out). It catalyses the reaction iodide(out) = iodide(in). The catalysed reaction is fluoride(in) = fluoride(out). The enzyme catalyses nitrate(in) = nitrate(out). It carries out the reaction thiocyanate(in) = thiocyanate(out). In terms of biological role, channel-forming tight junction protein with selectivity for anions, including chloride and hydrogencarbonate, and for solutes smaller than 9 Angstrom in diameter. In the kidney proximal tubule, may be involved in paracellular reabsorption of filtered anions. Does not affect water permeability. This is Claudin-17 (CLDN17) from Homo sapiens (Human).